The primary structure comprises 457 residues: Siroheme synthase (457 aa).

Residues 1-204 (MDHLPIFCQL…NDQKAITETT (204 aa)) form a precorrin-2 dehydrogenase /sirohydrochlorin ferrochelatase region. NAD(+) is bound by residues 22–23 (DV) and 43–44 (LA). The residue at position 128 (Ser128) is a Phosphoserine. The tract at residues 216 to 457 (GEVVLVGAGP…RDKLNWFSNH (242 aa)) is uroporphyrinogen-III C-methyltransferase. Pro225 contributes to the S-adenosyl-L-methionine binding site. Asp248 serves as the catalytic Proton acceptor. The active-site Proton donor is Lys270. Residues 301–303 (GGD), Ile306, 331–332 (TA), Met382, and Gly411 contribute to the S-adenosyl-L-methionine site.

It in the N-terminal section; belongs to the precorrin-2 dehydrogenase / sirohydrochlorin ferrochelatase family. The protein in the C-terminal section; belongs to the precorrin methyltransferase family.

The enzyme catalyses uroporphyrinogen III + 2 S-adenosyl-L-methionine = precorrin-2 + 2 S-adenosyl-L-homocysteine + H(+). It catalyses the reaction precorrin-2 + NAD(+) = sirohydrochlorin + NADH + 2 H(+). It carries out the reaction siroheme + 2 H(+) = sirohydrochlorin + Fe(2+). It participates in cofactor biosynthesis; adenosylcobalamin biosynthesis; precorrin-2 from uroporphyrinogen III: step 1/1. It functions in the pathway cofactor biosynthesis; adenosylcobalamin biosynthesis; sirohydrochlorin from precorrin-2: step 1/1. The protein operates within porphyrin-containing compound metabolism; siroheme biosynthesis; precorrin-2 from uroporphyrinogen III: step 1/1. Its pathway is porphyrin-containing compound metabolism; siroheme biosynthesis; siroheme from sirohydrochlorin: step 1/1. It participates in porphyrin-containing compound metabolism; siroheme biosynthesis; sirohydrochlorin from precorrin-2: step 1/1. Functionally, multifunctional enzyme that catalyzes the SAM-dependent methylations of uroporphyrinogen III at position C-2 and C-7 to form precorrin-2 via precorrin-1. Then it catalyzes the NAD-dependent ring dehydrogenation of precorrin-2 to yield sirohydrochlorin. Finally, it catalyzes the ferrochelation of sirohydrochlorin to yield siroheme. In Escherichia fergusonii (strain ATCC 35469 / DSM 13698 / CCUG 18766 / IAM 14443 / JCM 21226 / LMG 7866 / NBRC 102419 / NCTC 12128 / CDC 0568-73), this protein is Siroheme synthase.